Here is a 443-residue protein sequence, read N- to C-terminus: Protoheme IX farnesyltransferase, mitochondrial (443 aa).

Helical transmembrane passes span 174–194 (AAGF…LTSV), 235–255 (LAVS…TLGV), 257–277 (PLTG…YTPL), 280–300 (ISIA…VMGW), 309–329 (AGAF…FNAL), 364–384 (LLVL…FPIM), and 411–431 (LFFC…TCKR).

This sequence belongs to the UbiA prenyltransferase family.

Its subcellular location is the mitochondrion membrane. The catalysed reaction is heme b + (2E,6E)-farnesyl diphosphate + H2O = Fe(II)-heme o + diphosphate. Converts protoheme IX and farnesyl diphosphate to heme O. This chain is Protoheme IX farnesyltransferase, mitochondrial (COX10), found in Homo sapiens (Human).